Consider the following 174-residue polypeptide: Auxin-responsive protein IAA2 (174 aa).

Positions 16–20 match the EAR-like (transcriptional repression) motif; that stretch reads LCLGL. The interval 44 to 67 is disordered; that stretch reads FEETRDEEESTPPTKTQIVGWPPV. The region spanning 77-164 is the PB1 domain; it reads VSYVKVSMDG…SCKRLRIMKG (88 aa).

It belongs to the Aux/IAA family. In terms of assembly, homodimers and heterodimers. Interacts with the auxin-responsive protein IAA1. Interacts with TPL. As to expression, preferentially expressed in vegetative organs.

The protein resides in the nucleus. Aux/IAA proteins are short-lived transcriptional factors that function as repressors of early auxin response genes at low auxin concentrations. Repression is thought to result from the interaction with auxin response factors (ARFs), proteins that bind to the auxin-responsive promoter element (AuxRE). Formation of heterodimers with ARF proteins may alter their ability to modulate early auxin response genes expression. This chain is Auxin-responsive protein IAA2 (IAA2), found in Arabidopsis thaliana (Mouse-ear cress).